The following is a 745-amino-acid chain: Elongation factor G, mitochondrial (745 aa).

The region spanning 40-317 (EKIRNIGISA…AVLDYLPNPG (278 aa)) is the tr-type G domain. Residues 49–56 (AHIDSGKT), 116–120 (DTPGH), and 170–173 (NKLD) contribute to the GTP site.

Belongs to the TRAFAC class translation factor GTPase superfamily. Classic translation factor GTPase family. EF-G/EF-2 subfamily.

It is found in the mitochondrion. Its pathway is protein biosynthesis; polypeptide chain elongation. Functionally, mitochondrial GTPase that catalyzes the GTP-dependent ribosomal translocation step during translation elongation. During this step, the ribosome changes from the pre-translocational (PRE) to the post-translocational (POST) state as the newly formed A-site-bound peptidyl-tRNA and P-site-bound deacylated tRNA move to the P and E sites, respectively. Catalyzes the coordinated movement of the two tRNA molecules, the mRNA and conformational changes in the ribosome. Essential during development as it acts as a retrograde signal from mitochondria to the nucleus to slow down cell proliferation if mitochondrial energy output is low. The protein is Elongation factor G, mitochondrial of Drosophila willistoni (Fruit fly).